We begin with the raw amino-acid sequence, 315 residues long: Probable cell division protein WhiA (315 aa).

The H-T-H motif DNA-binding region spans 275–309; it reads TLKELGEMVSSGTVSKSGVNHRLRKIDEIADALRR.

Belongs to the WhiA family.

In terms of biological role, involved in cell division and chromosome segregation. The sequence is that of Probable cell division protein WhiA from Lysinibacillus sphaericus (strain C3-41).